Here is a 158-residue protein sequence, read N- to C-terminus: 3-hydroxyacyl-[acyl-carrier-protein] dehydratase FabZ (158 aa).

Residue His-57 is part of the active site.

This sequence belongs to the thioester dehydratase family. FabZ subfamily.

Its subcellular location is the cytoplasm. The catalysed reaction is a (3R)-hydroxyacyl-[ACP] = a (2E)-enoyl-[ACP] + H2O. Functionally, involved in unsaturated fatty acids biosynthesis. Catalyzes the dehydration of short chain beta-hydroxyacyl-ACPs and long chain saturated and unsaturated beta-hydroxyacyl-ACPs. In Anaeromyxobacter sp. (strain Fw109-5), this protein is 3-hydroxyacyl-[acyl-carrier-protein] dehydratase FabZ.